The primary structure comprises 192 residues: Transcriptional activator GvpE (192 aa).

Residue 140-145 (KRKVYR) coordinates DNA. Residues 150-181 (EATFDTVEPAVNRLVTFSLVLKALMIDCNARY) are leucine-zipper.

In terms of assembly, interacts with GvpD, also with c-GvpD from H.salinarum.

The protein localises to the cytoplasm. The amount of protein that accumulates is controlled by GvpD; GvpD causes a reduction in the amount of GvpE, preventing accumulation of excessive amounts of gas vesicles. Functionally, plays a regulatory role in gas vesicle synthesis, activates transcription of the gvpA operon, and probably of the gvpD operon. Gas vesicles are hollow, gas filled proteinaceous nanostructures found in some microorganisms. They allow positioning of halobacteria at the optimal depth for growth in the poorly aerated, shallow brine pools of their habitat. Its function is as follows. Expression of a 9.5 kb mc-vac DNA fragment containing 2 divergently transcribed regions (gvpD-gvpE-gvpF-gvpG-gvpH-gvpI-gvpJ-gvpK-gvpL-gvpM and gvpA-gvpC-gvpN-gvpO) allows H.volcanii to produce gas vesicles. The chain is Transcriptional activator GvpE from Haloferax mediterranei (strain ATCC 33500 / DSM 1411 / JCM 8866 / NBRC 14739 / NCIMB 2177 / R-4) (Halobacterium mediterranei).